A 271-amino-acid chain; its full sequence is Aquaporin-11 (271 aa).

Over 1–14 (MSPLLGLRSELQDT) the chain is Cytoplasmic. Residues 15-35 (CTSLGLMLSVVLLMGLARVVA) form a helical membrane-spanning segment. Residues 36 to 41 (RQQLHR) lie on the Lumenal side of the membrane. A helical membrane pass occupies residues 42-62 (PVAHAFVLEFLATFQLCCCTH). Over 63–74 (ELQLLSEQHPAH) the chain is Cytoplasmic. A helical transmembrane segment spans residues 75-95 (PTWTLTLVYFFSLVHGLTLVG). Topologically, residues 96–163 (TSSNPCGVMM…ACKNPIRVDL (68 aa)) are lumenal. The NPC signature appears at 99–101 (NPC). Residues 164-184 (LKAVITEAVCSFLFHSALLHF) form a helical membrane-spanning segment. Over 185–194 (QEVRTKLRIH) the chain is Cytoplasmic. Residues 195-215 (LLAALITFLVYAGGSLTGAVF) traverse the membrane as a helical segment. The NPA signature appears at 216 to 218 (NPA). The Lumenal portion of the chain corresponds to 216-234 (NPALALSLHFMCFDEAFPQ). A helical membrane pass occupies residues 235–255 (FFIVYWLAPSLGILLMILMFS). The Cytoplasmic portion of the chain corresponds to 256-271 (FFLPWLHNNHTINKKE).

It belongs to the MIP/aquaporin (TC 1.A.8) family. AQP11/AQP12 subfamily. Homodimer; disulfide-linked. Homotetramer. Can also form homomultimer. Not glycosylated. As to expression, detected in the sperm head and tail (at protein level). Expressed in subcutaneous adipocytes. Expressed in testis, kidney and ejaculated spermatozoa.

It localises to the endoplasmic reticulum membrane. Its subcellular location is the cytoplasmic vesicle membrane. The protein resides in the cell membrane. The catalysed reaction is H2O(in) = H2O(out). It catalyses the reaction glycerol(in) = glycerol(out). The enzyme catalyses H2O2(out) = H2O2(in). In terms of biological role, channel protein that facilitates the transport of water, glycerol and hydrogen peroxide across membrane of cell or organelles guaranteeing intracellular homeostasis in several organes like liver, kidney and brain. In situation of stress, participates in endoplasmic reticulum (ER) homeostasis by regulating redox homeostasis through the transport of hydrogen peroxide across the endoplasmic reticulum membrane thereby regulating the oxidative stress through the NADPH oxidase 2 pathway. Plays a role by maintaining an environment suitable for translation or protein foldings in the ER lumen namely by participating in the PKD1 glycosylation processing resulting in regulation of PKD1 membrane trafficking thereby preventing the accumulation of unfolding protein in ER. Plays a role in the proximal tubule function by regulating its endosomal acidification. May play a role in postnatal kidney development. The protein is Aquaporin-11 of Homo sapiens (Human).